We begin with the raw amino-acid sequence, 480 residues long: MQKLNKNVYDHYTQYPEKILQFGEGNFLRGFIDWQIDQLNQHTDFNGSVAVVQPRGSEKIKRLNEQDGLYTLFLQGMKDGEAVNEHMIINSISRGIDLFSDYEAYKELASSERLRFIISNTTEAGIVCDEKDRLEDRPQKTFPGKLTAFLYFRYQAFKGDQTKGCVLIPCELIENNGEKLRETVLHYAHLWKLEEGFTQWIHEANTFCNSLVDRIVPGFPVDSIDEITADLGYQDDLIVVGEQYYLWVIEGPDWIGKELPFAAAGLHTKIVSDLTPYRTKKVRILNGAHTAMTPVALLYGLKTVRDAVEHPEVGRFIRELIDDEILPVLKMEGLSQYADDVLNRFKNPYIKHYLESIALNAISKFKTRNLPTLKEYAEQKGQLPERLVFSFSALLYFYHDNETLQDDPAVLQFFKEVWCQEDGDMLRIASRVLGEQRLWGADLNEIPKLTDRVAVYLNHIHELGMQRALEQYCIQGGEVR.

Residue 19-30 (ILQFGEGNFLRG) coordinates NAD(+).

It belongs to the mannitol dehydrogenase family. UxaB subfamily.

The enzyme catalyses D-altronate + NAD(+) = keto-D-tagaturonate + NADH + H(+). It functions in the pathway carbohydrate metabolism; pentose and glucuronate interconversion. This Bacillus subtilis (strain 168) protein is Altronate oxidoreductase.